The primary structure comprises 416 residues: UDP-N-acetylglucosamine 1-carboxyvinyltransferase (416 aa).

22-23 (KN) contacts phosphoenolpyruvate. Arg-92 is a UDP-N-acetyl-alpha-D-glucosamine binding site. The active-site Proton donor is Cys-116. Residue Cys-116 is modified to 2-(S-cysteinyl)pyruvic acid O-phosphothioketal. UDP-N-acetyl-alpha-D-glucosamine contacts are provided by residues 121 to 125 (RPVDQ), Asp-304, and Ile-326.

This sequence belongs to the EPSP synthase family. MurA subfamily.

The protein localises to the cytoplasm. The enzyme catalyses phosphoenolpyruvate + UDP-N-acetyl-alpha-D-glucosamine = UDP-N-acetyl-3-O-(1-carboxyvinyl)-alpha-D-glucosamine + phosphate. It participates in cell wall biogenesis; peptidoglycan biosynthesis. Cell wall formation. Adds enolpyruvyl to UDP-N-acetylglucosamine. The chain is UDP-N-acetylglucosamine 1-carboxyvinyltransferase from Cupriavidus pinatubonensis (strain JMP 134 / LMG 1197) (Cupriavidus necator (strain JMP 134)).